The sequence spans 607 residues: Autophagy-related protein 16-1 (607 aa).

An interaction with ATG5 region spans residues 13 to 43 (WKRHIAEELRRRDRLQRQAFEEIILQYTKLL). Residues 79–230 (DSQLQEMAQL…QKELAEAAKE (152 aa)) adopt a coiled-coil conformation. Ser-139 carries the phosphoserine modification. A WIPI2-binding region spans residues 207 to 230 (AENEKDSRRRQARLQKELAEAAKE). An RB1CC1-binding region spans residues 230–242 (EPLPVEQDDDIEV). Residues Ser-269 and Ser-287 each carry the phosphoserine modification. The short motif at 296 to 299 (DIMD) is the Caspase cleavage element. WD repeat units follow at residues 320–359 (AHDGEVNAVQFSPGSRLLATGGMDRRVKLWEAFGDKCEFK), 364–403 (GSNAGITSIEFDSAGAYLLAASNDFASRIWTVDDYRLRHT), 406–445 (GHSGKVLSAKFLLDNARIVSGSHDRTLKLWDLRSKVCIKT), 447–484 (FAGSSCNDIVCTEQCVMSGHFDKKIRFWDIRSESVVRE), 486–525 (ELLGKITALDLNPERTELLSCSRDDLLKVIDLRTNAVKQT), 532–573 (KCGS…KVLS), and 575–607 (QHSSSINAVAWAPSGLHVVSVDKGSRAVLWAQP).

Belongs to the WD repeat ATG16 family. As to quaternary structure, homodimer. Homooligomer. Heterooligomer with ATG16L2. Interacts with WIPI1. Interacts with WIPI2. Interacts with RB1CC1; the interaction is required for ULK1 complex-dependent autophagy. Interacts with ATG5. Part of the minor complex composed of 4 sets of ATG12-ATG5 and ATG16L1 (400 kDa); this complex interacts with ATG3 leading to disruption of ATG7 interaction and promotion of ATG8-like proteins lipidation. Part of the major complex composed of 8 sets of ATG12-ATG5 and ATG16L1 (800 kDa). Interacts with RAB33B (GTP- and GDP-bound forms); the complex consists of a tetramer where two RAB33B molecules bind independently one molecule of the ATG16L1 homodimer; the interaction promotes ATG12-ATG5-ATG16L1 complex recruitment to phagophores. Interacts (via WD repeats) with TMEM59; the interaction mediates unconventional autophagic activity of TMEM59. Interacts with TLR2. Interacts (via WD repeats) with MEFV. Interacts (via N-terminal) with CLTC. Interacts with NOD1. Interacts with NOD2. Interacts with TUFM. Interacts with TRIM16. Interacts (via WD repeats) with SPATA33. Interacts with Irgm1. Post-translationally, proteolytic cleavage by activated CASP3 leads to degradation and may regulate autophagy upon cellular stress and apoptotic stimuli. In terms of processing, phosphorylation at Ser-139 promotes association with the ATG12-ATG5 conjugate to form the ATG12-ATG5-ATG16L1 complex. Widely expressed. Expressed in the testis and sperm midpiece (at protein level). In terms of tissue distribution, expressed in liver. As to expression, highly expressed in liver. Expressed in brain.

Its subcellular location is the cytoplasm. The protein resides in the preautophagosomal structure membrane. It localises to the endosome membrane. The protein localises to the lysosome membrane. In terms of biological role, plays an essential role in both canonical and non-canonical autophagy: interacts with ATG12-ATG5 to mediate the lipidation to ATG8 family proteins (MAP1LC3A, MAP1LC3B, MAP1LC3C, GABARAPL1, GABARAPL2 and GABARAP). Acts as a molecular hub, coordinating autophagy pathways via distinct domains that support either canonical or non-canonical signaling. During canonical autophagy, interacts with ATG12-ATG5 to mediate the conjugation of phosphatidylethanolamine (PE) to ATG8 proteins, to produce a membrane-bound activated form of ATG8. Thereby, controls the elongation of the nascent autophagosomal membrane. As part of the ATG8 conjugation system with ATG5 and ATG12, required for recruitment of LRRK2 to stressed lysosomes and induction of LRRK2 kinase activity in response to lysosomal stress. Also involved in non-canonical autophagy, a parallel pathway involving conjugation of ATG8 proteins to single membranes at endolysosomal compartments, probably by catalyzing conjugation of phosphatidylserine (PS) to ATG8. Non-canonical autophagy plays a key role in epithelial cells to limit lethal infection by influenza A (IAV) virus. Regulates mitochondrial antiviral signaling (MAVS)-dependent type I interferon (IFN-I) production. Negatively regulates NOD1- and NOD2-driven inflammatory cytokine response. Instead, promotes an autophagy-dependent antibacterial pathway together with NOD1 or NOD2. Plays a role in regulating morphology and function of Paneth cell. The sequence is that of Autophagy-related protein 16-1 from Mus musculus (Mouse).